Here is a 145-residue protein sequence, read N- to C-terminus: Large ribosomal subunit protein uL15 (145 aa).

Residues 1–13 show a composition bias toward basic and acidic residues; that stretch reads MNLHELKYNEGAR. The interval 1–56 is disordered; sequence MNLHELKYNEGARKEKHRVGRGHAAGKGKQAGKGQSGQLKRTGSKPGFEGGQNPWY. Residues 14-26 show a composition bias toward basic residues; that stretch reads KEKHRVGRGHAAG.

Belongs to the universal ribosomal protein uL15 family. Part of the 50S ribosomal subunit.

Functionally, binds to the 23S rRNA. This chain is Large ribosomal subunit protein uL15, found in Mycoplasma mobile (strain ATCC 43663 / 163K / NCTC 11711) (Mesomycoplasma mobile).